The chain runs to 187 residues: Acireductone dioxygenase (187 aa).

Fe(2+) is bound by residues His90, His92, Glu96, and His135. Residues His90, His92, Glu96, and His135 each contribute to the Ni(2+) site.

The protein belongs to the acireductone dioxygenase (ARD) family. Fe(2+) serves as cofactor. Requires Ni(2+) as cofactor.

Its subcellular location is the cytoplasm. The protein resides in the nucleus. It catalyses the reaction 1,2-dihydroxy-5-(methylsulfanyl)pent-1-en-3-one + O2 = 4-methylsulfanyl-2-oxobutanoate + formate + 2 H(+). The enzyme catalyses 1,2-dihydroxy-5-(methylsulfanyl)pent-1-en-3-one + O2 = 3-(methylsulfanyl)propanoate + CO + formate + 2 H(+). It participates in amino-acid biosynthesis; L-methionine biosynthesis via salvage pathway; L-methionine from S-methyl-5-thio-alpha-D-ribose 1-phosphate: step 5/6. In terms of biological role, catalyzes 2 different reactions between oxygen and the acireductone 1,2-dihydroxy-3-keto-5-methylthiopentene (DHK-MTPene) depending upon the metal bound in the active site. Fe-containing acireductone dioxygenase (Fe-ARD) produces formate and 2-keto-4-methylthiobutyrate (KMTB), the alpha-ketoacid precursor of methionine in the methionine recycle pathway. Ni-containing acireductone dioxygenase (Ni-ARD) produces methylthiopropionate, carbon monoxide and formate, and does not lie on the methionine recycle pathway. The sequence is that of Acireductone dioxygenase from Drosophila pseudoobscura pseudoobscura (Fruit fly).